The primary structure comprises 151 residues: D-aminoacyl-tRNA deacylase (151 aa).

The Gly-cisPro motif, important for rejection of L-amino acids motif lies at 137–138; it reads GP.

It belongs to the DTD family. As to quaternary structure, homodimer.

It localises to the cytoplasm. The catalysed reaction is glycyl-tRNA(Ala) + H2O = tRNA(Ala) + glycine + H(+). The enzyme catalyses a D-aminoacyl-tRNA + H2O = a tRNA + a D-alpha-amino acid + H(+). In terms of biological role, an aminoacyl-tRNA editing enzyme that deacylates mischarged D-aminoacyl-tRNAs. Also deacylates mischarged glycyl-tRNA(Ala), protecting cells against glycine mischarging by AlaRS. Acts via tRNA-based rather than protein-based catalysis; rejects L-amino acids rather than detecting D-amino acids in the active site. By recycling D-aminoacyl-tRNA to D-amino acids and free tRNA molecules, this enzyme counteracts the toxicity associated with the formation of D-aminoacyl-tRNA entities in vivo and helps enforce protein L-homochirality. In Protochlamydia amoebophila (strain UWE25), this protein is D-aminoacyl-tRNA deacylase.